The following is a 293-amino-acid chain: GTPase Era (293 aa).

Residues 3-170 (KSGFITIIGR…VELMVKYMPE (168 aa)) enclose the Era-type G domain. Residues 11–18 (GRPNVGKS) form a G1 region. 11–18 (GRPNVGKS) contacts GTP. Residues 37–41 (QTTRN) are G2. The G3 stretch occupies residues 58 to 61 (DTPG). GTP is bound by residues 58-62 (DTPGI) and 120-123 (NKID). Residues 120 to 123 (NKID) are G4. A G5 region spans residues 149–151 (ISA). A KH type-2 domain is found at 201–278 (LSKEVPHGIA…YLEVWVKVKK (78 aa)).

It belongs to the TRAFAC class TrmE-Era-EngA-EngB-Septin-like GTPase superfamily. Era GTPase family. Monomer.

The protein localises to the cytoplasm. Its subcellular location is the cell membrane. Its function is as follows. An essential GTPase that binds both GDP and GTP, with rapid nucleotide exchange. Plays a role in 16S rRNA processing and 30S ribosomal subunit biogenesis and possibly also in cell cycle regulation and energy metabolism. The polypeptide is GTPase Era (Clostridium kluyveri (strain NBRC 12016)).